The chain runs to 439 residues: Trigger factor (439 aa).

One can recognise a PPIase FKBP-type domain in the interval Gly158 to Met233. The interval Lys410–Glu439 is disordered. The segment covering Ala414 to Glu428 has biased composition (acidic residues).

It belongs to the FKBP-type PPIase family. Tig subfamily.

The protein localises to the cytoplasm. It carries out the reaction [protein]-peptidylproline (omega=180) = [protein]-peptidylproline (omega=0). In terms of biological role, involved in protein export. Acts as a chaperone by maintaining the newly synthesized protein in an open conformation. Functions as a peptidyl-prolyl cis-trans isomerase. The polypeptide is Trigger factor (Kosmotoga olearia (strain ATCC BAA-1733 / DSM 21960 / TBF 19.5.1)).